The sequence spans 52 residues: Light-harvesting protein B-880 alpha chain (52 aa).

Residues 1-12 (MWKVWLLFDPRR) lie on the Cytoplasmic side of the membrane. The chain crosses the membrane as a helical span at residues 13–33 (TLVALFTFLFVLALLIHFILL). H29 lines the a bacteriochlorophyll pocket. The Periplasmic segment spans residues 34-52 (STDRFNWMQGAPTAPAQTS).

This sequence belongs to the antenna complex alpha subunit family. The core complex is formed by different alpha and beta chains, binding bacteriochlorophyll molecules, and arranged most probably in tetrameric structures disposed around the reaction center. The non-pigmented gamma chains may constitute additional components.

Its subcellular location is the cell inner membrane. Its function is as follows. Antenna complexes are light-harvesting systems, which transfer the excitation energy to the reaction centers. The sequence is that of Light-harvesting protein B-880 alpha chain from Afifella marina (Rhodobium marinum).